The following is a 539-amino-acid chain: CTP synthase (539 aa).

The amidoligase domain stretch occupies residues 1 to 267 (MTKYIFVTGG…DQKVVDFLHI (267 aa)). Serine 13 serves as a coordination point for CTP. Serine 13 contributes to the UTP binding site. An ATP-binding site is contributed by 14–19 (SLGKGI). Position 54 (tyrosine 54) interacts with L-glutamine. ATP is bound at residue aspartate 71. Mg(2+) is bound by residues aspartate 71 and glutamate 141. Residues 148–150 (DME), 188–193 (KSKPTQ), and lysine 224 contribute to the CTP site. Residues 188-193 (KSKPTQ) and lysine 224 contribute to the UTP site. Residues 294 to 537 (KITLVGKYVE…IGAASGLQVD (244 aa)) enclose the Glutamine amidotransferase type-1 domain. Residue glycine 356 coordinates L-glutamine. The active-site Nucleophile; for glutamine hydrolysis is the cysteine 383. L-glutamine is bound by residues 384–387 (LGMQ), glutamate 407, and arginine 465. Residues histidine 510 and glutamate 512 contribute to the active site.

This sequence belongs to the CTP synthase family. As to quaternary structure, homotetramer.

The enzyme catalyses UTP + L-glutamine + ATP + H2O = CTP + L-glutamate + ADP + phosphate + 2 H(+). It catalyses the reaction L-glutamine + H2O = L-glutamate + NH4(+). The catalysed reaction is UTP + NH4(+) + ATP = CTP + ADP + phosphate + 2 H(+). The protein operates within pyrimidine metabolism; CTP biosynthesis via de novo pathway; CTP from UDP: step 2/2. With respect to regulation, allosterically activated by GTP, when glutamine is the substrate; GTP has no effect on the reaction when ammonia is the substrate. The allosteric effector GTP functions by stabilizing the protein conformation that binds the tetrahedral intermediate(s) formed during glutamine hydrolysis. Inhibited by the product CTP, via allosteric rather than competitive inhibition. Catalyzes the ATP-dependent amination of UTP to CTP with either L-glutamine or ammonia as the source of nitrogen. Regulates intracellular CTP levels through interactions with the four ribonucleotide triphosphates. In Lactobacillus delbrueckii subsp. bulgaricus (strain ATCC 11842 / DSM 20081 / BCRC 10696 / JCM 1002 / NBRC 13953 / NCIMB 11778 / NCTC 12712 / WDCM 00102 / Lb 14), this protein is CTP synthase.